The primary structure comprises 156 residues: Small ribosomal subunit protein uS7c (156 aa).

This sequence belongs to the universal ribosomal protein uS7 family. In terms of assembly, part of the 30S ribosomal subunit.

Its subcellular location is the plastid. The protein resides in the chloroplast. Functionally, one of the primary rRNA binding proteins, it binds directly to 16S rRNA where it nucleates assembly of the head domain of the 30S subunit. In Zamia furfuracea (Cardboard cycad), this protein is Small ribosomal subunit protein uS7c (rps7).